Consider the following 294-residue polypeptide: N-acetylmuramic acid 6-phosphate etherase (294 aa).

One can recognise an SIS domain in the interval 56–219 (TSYSLRNGGR…STLSMVSVGK (164 aa)). Catalysis depends on Glu-84, which acts as the Proton donor. Glu-115 is an active-site residue.

This sequence belongs to the GCKR-like family. MurNAc-6-P etherase subfamily. As to quaternary structure, homodimer.

It carries out the reaction N-acetyl-D-muramate 6-phosphate + H2O = N-acetyl-D-glucosamine 6-phosphate + (R)-lactate. It functions in the pathway amino-sugar metabolism; 1,6-anhydro-N-acetylmuramate degradation. Its pathway is amino-sugar metabolism; N-acetylmuramate degradation. The protein operates within cell wall biogenesis; peptidoglycan recycling. In terms of biological role, specifically catalyzes the cleavage of the D-lactyl ether substituent of MurNAc 6-phosphate, producing GlcNAc 6-phosphate and D-lactate. Together with AnmK, is also required for the utilization of anhydro-N-acetylmuramic acid (anhMurNAc) either imported from the medium or derived from its own cell wall murein, and thus plays a role in cell wall recycling. The chain is N-acetylmuramic acid 6-phosphate etherase from Francisella tularensis subsp. holarctica (strain LVS).